The following is a 413-amino-acid chain: Amino acid transporter AVT3B (413 aa).

Residues 1 to 27 are Cytoplasmic-facing; the sequence is MGLEEQGRAREDTPLLGKGRPLSSKFK. A helical membrane pass occupies residues 28–48; it reads TFANVFIAIVGAGVLGLPYAF. At 49-54 the chain is on the vacuolar side; the sequence is KRTGWL. Residues 55 to 75 traverse the membrane as a helical segment; that stretch reads MGLLTLFSVAALINHCMMLLV. The Cytoplasmic portion of the chain corresponds to 76 to 103; the sequence is HIRRKLGVSNIGSFGDLGFAACGNLGRF. A helical transmembrane segment spans residues 104–124; that stretch reads VVDILIILSQAGFCVGYLIFI. Over 125-145 the chain is Vacuolar; the sequence is GNTLANLSKPTKSTTLMSLRH. A helical membrane pass occupies residues 146–166; sequence LMGVSPKSLYIWGCFPFQLGL. Over 167 to 174 the chain is Cytoplasmic; it reads NSIKTLTH. The helical transmembrane segment at 175–195 threads the bilayer; the sequence is LAPLSIFADVVDLGAMAVVIV. Residues 196–207 lie on the Vacuolar side of the membrane; the sequence is EDIKITVVQRPQ. The helical transmembrane segment at 208-228 threads the bilayer; sequence VVAFGGMSVFFYGMGVAVYAF. Residues 229–249 lie on the Cytoplasmic side of the membrane; the sequence is EGVGMVLPLESETKDKDKFGK. The chain crosses the membrane as a helical span at residues 250 to 270; it reads VLALSMLFIAVMYGSFGVLGY. The Vacuolar portion of the chain corresponds to 271-288; the sequence is MAFGDDTMDIITANLGAG. The helical transmembrane segment at 289–309 threads the bilayer; the sequence is VVSSLVQLGLCINLFFTFPLM. Residues 310-331 lie on the Cytoplasmic side of the membrane; that stretch reads MNPVFEIVERRFWSGMYCVWLR. The helical transmembrane segment at 332 to 352 threads the bilayer; it reads WLLVLAVTLVALLVPNFADFL. Residues 353 to 355 are Vacuolar-facing; the sequence is SLV. The helical transmembrane segment at 356-376 threads the bilayer; the sequence is GSSVCCALGFVLPSLFHLMVF. Topologically, residues 377-390 are cytoplasmic; sequence KDEMEWKQRALDVG. Residues 391–411 form a helical membrane-spanning segment; that stretch reads ILLLGVILGVSGTWSSLTEIF. At 412-413 the chain is on the vacuolar side; it reads QE.

It belongs to the amino acid/polyamine transporter 2 family. Amino acid/auxin permease (AAAP) (TC 2.A.18.8) subfamily. Ubiquitous.

The protein localises to the vacuole membrane. Its function is as follows. Translocates preferentially neutral amino acids from the vacuole to the cytoplasm. This chain is Amino acid transporter AVT3B, found in Arabidopsis thaliana (Mouse-ear cress).